The following is a 449-amino-acid chain: Adenylosuccinate synthetase (449 aa).

GTP is bound by residues 12–18 (GDEGKGK) and 40–42 (GHT). The active-site Proton acceptor is the D13. Residues D13 and G40 each coordinate Mg(2+). IMP-binding positions include 13-16 (DEGK), 38-41 (NAGH), T128, R142, Q223, T238, and R302. Residue H41 is the Proton donor of the active site. Substrate is bound at residue 298–304 (TTTGRQR). GTP is bound by residues R304, 330–332 (KLD), and 412–414 (SLG).

Belongs to the adenylosuccinate synthetase family. In terms of assembly, homodimer. Requires Mg(2+) as cofactor.

The protein localises to the cytoplasm. It carries out the reaction IMP + L-aspartate + GTP = N(6)-(1,2-dicarboxyethyl)-AMP + GDP + phosphate + 2 H(+). It participates in purine metabolism; AMP biosynthesis via de novo pathway; AMP from IMP: step 1/2. Functionally, plays an important role in the de novo pathway of purine nucleotide biosynthesis. Catalyzes the first committed step in the biosynthesis of AMP from IMP. In Synechococcus sp. (strain JA-2-3B'a(2-13)) (Cyanobacteria bacterium Yellowstone B-Prime), this protein is Adenylosuccinate synthetase.